The sequence spans 339 residues: Serine/threonine-protein kinase pdik1l-B (339 aa).

One can recognise a Protein kinase domain in the interval 8–332 (YDLIREVGRG…LELKLIQIAF (325 aa)). ATP is bound by residues 14–22 (VGRGSYGLV) and K37. The active-site Proton acceptor is D164.

The protein belongs to the protein kinase superfamily. Ser/Thr protein kinase family.

It is found in the nucleus. The catalysed reaction is L-seryl-[protein] + ATP = O-phospho-L-seryl-[protein] + ADP + H(+). It carries out the reaction L-threonyl-[protein] + ATP = O-phospho-L-threonyl-[protein] + ADP + H(+). The chain is Serine/threonine-protein kinase pdik1l-B (pdik1-b) from Xenopus laevis (African clawed frog).